A 190-amino-acid polypeptide reads, in one-letter code: Small ribosomal subunit protein uS5 (190 aa).

The S5 DRBM domain maps to 22–85 (FVDKLVHINR…ESAKRNLTRV (64 aa)).

Belongs to the universal ribosomal protein uS5 family. Part of the 30S ribosomal subunit. Contacts proteins S4 and S8.

Functionally, with S4 and S12 plays an important role in translational accuracy. Located at the back of the 30S subunit body where it stabilizes the conformation of the head with respect to the body. This is Small ribosomal subunit protein uS5 from Rhodopseudomonas palustris (strain BisB18).